A 330-amino-acid polypeptide reads, in one-letter code: Ribosomal RNA small subunit methyltransferase A (330 aa).

S-adenosyl-L-methionine contacts are provided by His29, Leu31, Gly56, Glu77, and Asp98. The disordered stretch occupies residues 115-158; it reads PVRSAGLPQAETAPKGLEPAGSSSQQGPRDWLRQTAGAAAPSRG. Residue Asn177 participates in S-adenosyl-L-methionine binding.

The protein belongs to the class I-like SAM-binding methyltransferase superfamily. rRNA adenine N(6)-methyltransferase family. RsmA subfamily.

It is found in the cytoplasm. The catalysed reaction is adenosine(1518)/adenosine(1519) in 16S rRNA + 4 S-adenosyl-L-methionine = N(6)-dimethyladenosine(1518)/N(6)-dimethyladenosine(1519) in 16S rRNA + 4 S-adenosyl-L-homocysteine + 4 H(+). In terms of biological role, specifically dimethylates two adjacent adenosines (A1518 and A1519) in the loop of a conserved hairpin near the 3'-end of 16S rRNA in the 30S particle. May play a critical role in biogenesis of 30S subunits. This Polaromonas sp. (strain JS666 / ATCC BAA-500) protein is Ribosomal RNA small subunit methyltransferase A.